The primary structure comprises 395 residues: MTMLKTKADPMIVSMGPHHPSMHGVLRLIVTLDGENVIDCEPILGYLHRGMEKIAENRTTLQYLPYVTRWDYLATMFTEAVTVNAPERLANIQVPKRASYIRVIMLELSRLASHLLWLGPFMADIGAQTPFFYIFREREMIYDLFESATGMRMMHNYFRIGGVAVDLPYGWVDKCLDFCDYFLPKIDEYERLITRNPIFLKRVEGVGFIGREEAINWGLSGPMLRASGVQWDLRKVDHYECYDEFDWQVEWQTEGDCLARYLVRIGEMRESTKIIQQALKSIPGGPYENLEARRIGLIGTDSAQWNDFEYQFISKKPSPTFKLPKQEHYVRVEAPKGELGIYLIGDDSIFPWRWKIRPPGFINLQILPQLLRGVKLADIMTILGSIDIIMGEVDR.

This sequence belongs to the complex I 49 kDa subunit family. As to quaternary structure, NDH is composed of at least 16 different subunits, 5 of which are encoded in the nucleus.

The protein localises to the plastid. It is found in the chloroplast thylakoid membrane. It carries out the reaction a plastoquinone + NADH + (n+1) H(+)(in) = a plastoquinol + NAD(+) + n H(+)(out). The enzyme catalyses a plastoquinone + NADPH + (n+1) H(+)(in) = a plastoquinol + NADP(+) + n H(+)(out). Its function is as follows. NDH shuttles electrons from NAD(P)H:plastoquinone, via FMN and iron-sulfur (Fe-S) centers, to quinones in the photosynthetic chain and possibly in a chloroplast respiratory chain. The immediate electron acceptor for the enzyme in this species is believed to be plastoquinone. Couples the redox reaction to proton translocation, and thus conserves the redox energy in a proton gradient. The protein is NAD(P)H-quinone oxidoreductase subunit H, chloroplastic of Staurastrum punctulatum (Green alga).